The following is a 452-amino-acid chain: tRNA modification GTPase MnmE (452 aa).

3 residues coordinate (6S)-5-formyl-5,6,7,8-tetrahydrofolate: R21, E78, and K118. Residues 214 to 375 form the TrmE-type G domain; that stretch reads GMKVVIAGRP…LREHLKKSMG (162 aa). N224 contacts K(+). Residues 224–229, 243–249, and 268–271 each bind GTP; these read NAGKSS, TNIAGTT, and DTAG. Residue S228 participates in Mg(2+) binding. K(+) is bound by residues T243, I245, and T248. T249 provides a ligand contact to Mg(2+). K452 contacts (6S)-5-formyl-5,6,7,8-tetrahydrofolate.

It belongs to the TRAFAC class TrmE-Era-EngA-EngB-Septin-like GTPase superfamily. TrmE GTPase family. As to quaternary structure, homodimer. Heterotetramer of two MnmE and two MnmG subunits. K(+) is required as a cofactor.

Its subcellular location is the cytoplasm. Exhibits a very high intrinsic GTPase hydrolysis rate. Involved in the addition of a carboxymethylaminomethyl (cmnm) group at the wobble position (U34) of certain tRNAs, forming tRNA-cmnm(5)s(2)U34. The chain is tRNA modification GTPase MnmE from Actinobacillus pleuropneumoniae serotype 3 (strain JL03).